Reading from the N-terminus, the 385-residue chain is Putative RNA methyltransferase YpsC (385 aa).

A THUMP domain is found at 44-156; that stretch reads AICRANLWLR…KDQALITLDS (113 aa).

It belongs to the methyltransferase superfamily. Interacts with the RNA polymerase core.

The sequence is that of Putative RNA methyltransferase YpsC (ypsC) from Bacillus subtilis (strain 168).